Consider the following 215-residue polypeptide: 3,4-dihydroxy-2-butanone 4-phosphate synthase (215 aa).

Residues 38-39, aspartate 43, 151-155, and glutamate 175 contribute to the D-ribulose 5-phosphate site; these read RE and RRGHT. Glutamate 39 serves as a coordination point for Mg(2+). Histidine 154 contributes to the Mg(2+) binding site.

This sequence belongs to the DHBP synthase family. Homodimer. The cofactor is Mg(2+). It depends on Mn(2+) as a cofactor.

The enzyme catalyses D-ribulose 5-phosphate = (2S)-2-hydroxy-3-oxobutyl phosphate + formate + H(+). It participates in cofactor biosynthesis; riboflavin biosynthesis; 2-hydroxy-3-oxobutyl phosphate from D-ribulose 5-phosphate: step 1/1. Catalyzes the conversion of D-ribulose 5-phosphate to formate and 3,4-dihydroxy-2-butanone 4-phosphate. This chain is 3,4-dihydroxy-2-butanone 4-phosphate synthase, found in Haemophilus influenzae (strain 86-028NP).